The primary structure comprises 472 residues: Adenosylhomocysteinase (472 aa).

Thr-64, Asp-138, and Glu-198 together coordinate substrate. An NAD(+)-binding site is contributed by 199-201; sequence TTT. Lys-228 and Asp-232 together coordinate substrate. Residues Asn-233, 262–267, Glu-285, Asn-320, 341–343, and Asn-386 contribute to the NAD(+) site; these read GFGDVG and IGH.

It belongs to the adenosylhomocysteinase family. Requires NAD(+) as cofactor.

It is found in the cytoplasm. It carries out the reaction S-adenosyl-L-homocysteine + H2O = L-homocysteine + adenosine. The protein operates within amino-acid biosynthesis; L-homocysteine biosynthesis; L-homocysteine from S-adenosyl-L-homocysteine: step 1/1. Functionally, may play a key role in the regulation of the intracellular concentration of adenosylhomocysteine. The protein is Adenosylhomocysteinase of Prochlorococcus marinus subsp. pastoris (strain CCMP1986 / NIES-2087 / MED4).